Consider the following 79-residue polypeptide: Protein SNA2 (79 aa).

Residues 1 to 6 are Cytoplasmic-facing; the sequence is MHARDW. The chain crosses the membrane as a helical span at residues 7-27; the sequence is FLVFIAIFIPPLAVWLKRGFF. Residues 28–32 lie on the Vesicular side of the membrane; the sequence is TKDLL. A helical membrane pass occupies residues 33 to 53; it reads INFLLFLLGFFPGLIHALYVI. Residues 54–79 are Cytoplasmic-facing; that stretch reads SCHPYEENEARYSHLSSSDDNYGSLA. Residues Ser71 and Ser77 each carry the phosphoserine modification.

Belongs to the UPF0057 (PMP3) family.

The protein resides in the membrane. It localises to the lipid droplet. This is Protein SNA2 (SNA2) from Saccharomyces cerevisiae (strain ATCC 204508 / S288c) (Baker's yeast).